The chain runs to 418 residues: Arrestin domain-containing protein 4 (418 aa).

2 consecutive short sequence motifs (PPxY motif) follow at residues 350–353 (PPNY) and 395–398 (PPLY).

This sequence belongs to the arrestin family. In terms of assembly, interacts with ADRB2. Interacts (via PPxY motifs) with ITCH, NEDD4L and WWP2. Interacts with AVPR2. Identified in a complex containing at least ARRDC4, AVPR2 and HGS. Interacts with SLC11A2; controls the incorporation of SLC11A2 into extracellular vesicles through an ubiquitination-dependent mechanism. Interacts with TRIM65.

The protein localises to the early endosome. Its subcellular location is the cell membrane. It localises to the cytoplasmic vesicle. In terms of biological role, functions as an adapter recruiting ubiquitin-protein ligases to their specific substrates. Plays a role in endocytosis of activated G protein-coupled receptors (GPCRs). Through an ubiquitination-dependent mechanism also plays a role in the incorporation of SLC11A2 into extracellular vesicles. May play a role in glucose uptake. Participates in innate immune response by promoting IFIH1/MDA5 activation through interaction with TRIM65. This Homo sapiens (Human) protein is Arrestin domain-containing protein 4 (ARRDC4).